Here is a 461-residue protein sequence, read N- to C-terminus: V-type ATP synthase beta chain (461 aa).

It belongs to the ATPase alpha/beta chains family.

In terms of biological role, produces ATP from ADP in the presence of a proton gradient across the membrane. The V-type beta chain is a regulatory subunit. The polypeptide is V-type ATP synthase beta chain (Clostridium botulinum (strain 657 / Type Ba4)).